Reading from the N-terminus, the 83-residue chain is U5-theraphotoxin-Hs1b 1 (83 aa).

Positions 1–21 are cleaved as a signal peptide; that stretch reads MKTSMFLTLTGLVLLFVVCYA. Positions 22-49 are excised as a propeptide; sequence SESEEKEFPKELLSSIFAADSDFKEEER. Cystine bridges form between Cys51–Cys63, Cys56–Cys68, and Cys62–Cys75.

Belongs to the neurotoxin 10 (Hwtx-1) family. 51 (Hntx-8) subfamily. Hntx-8 sub-subfamily. Expressed by the venom gland.

It localises to the secreted. In terms of biological role, weakly inhibits 5HT3A receptors and Kv1.3/KCNA3 voltage-gated potassium channels. Agglutinates erythrocytes. The protein is U5-theraphotoxin-Hs1b 1 of Cyriopagopus schmidti (Chinese bird spider).